A 172-amino-acid polypeptide reads, in one-letter code: Bacilliredoxin SRU_0242 (172 aa).

The tract at residues 141 to 172 (TDEAPPSDAPSRPDLSSSPNAGGLPSTFQSIS) is disordered. A compositionally biased stretch (polar residues) spans 154 to 172 (DLSSSPNAGGLPSTFQSIS).

This sequence belongs to the bacilliredoxin family.

This Salinibacter ruber (strain DSM 13855 / M31) protein is Bacilliredoxin SRU_0242.